Reading from the N-terminus, the 429-residue chain is Aspartate--tRNA(Asp/Asn) ligase (429 aa).

An L-aspartate-binding site is contributed by Glu167. Residues 189–192 (QLYK) are aspartate. Arg210 lines the L-aspartate pocket. ATP-binding positions include 210 to 212 (RAE) and Glu352. Mg(2+) is bound by residues Glu352 and Ser355. Residues Ser355 and Arg359 each coordinate L-aspartate. 400 to 403 (GLAR) lines the ATP pocket.

This sequence belongs to the class-II aminoacyl-tRNA synthetase family. Type 2 subfamily. Homodimer. The cofactor is Mg(2+).

Its subcellular location is the cytoplasm. The enzyme catalyses tRNA(Asx) + L-aspartate + ATP = L-aspartyl-tRNA(Asx) + AMP + diphosphate. Aspartyl-tRNA synthetase with relaxed tRNA specificity since it is able to aspartylate not only its cognate tRNA(Asp) but also tRNA(Asn). Reaction proceeds in two steps: L-aspartate is first activated by ATP to form Asp-AMP and then transferred to the acceptor end of tRNA(Asp/Asn). The protein is Aspartate--tRNA(Asp/Asn) ligase of Saccharolobus solfataricus (strain ATCC 35092 / DSM 1617 / JCM 11322 / P2) (Sulfolobus solfataricus).